The primary structure comprises 95 residues: Co-chaperonin GroES (95 aa).

This sequence belongs to the GroES chaperonin family. In terms of assembly, heptamer of 7 subunits arranged in a ring. Interacts with the chaperonin GroEL.

Its subcellular location is the cytoplasm. Together with the chaperonin GroEL, plays an essential role in assisting protein folding. The GroEL-GroES system forms a nano-cage that allows encapsulation of the non-native substrate proteins and provides a physical environment optimized to promote and accelerate protein folding. GroES binds to the apical surface of the GroEL ring, thereby capping the opening of the GroEL channel. This chain is Co-chaperonin GroES, found in Bordetella petrii (strain ATCC BAA-461 / DSM 12804 / CCUG 43448).